The sequence spans 238 residues: Uridylate kinase (238 aa).

10–13 (KFSG) serves as a coordination point for ATP. The segment at 18-23 (GGNGFG) is involved in allosteric activation by GTP. A UMP-binding site is contributed by Gly52. Gly53 and Arg57 together coordinate ATP. UMP contacts are provided by residues Asp73 and 134–141 (TGNPFFTT). The ATP site is built by Thr161, Tyr167, and Asp170.

This sequence belongs to the UMP kinase family. Homohexamer.

The protein resides in the cytoplasm. The enzyme catalyses UMP + ATP = UDP + ADP. Its pathway is pyrimidine metabolism; CTP biosynthesis via de novo pathway; UDP from UMP (UMPK route): step 1/1. Its activity is regulated as follows. Allosterically activated by GTP. Inhibited by UTP. Catalyzes the reversible phosphorylation of UMP to UDP. The polypeptide is Uridylate kinase (Campylobacter fetus subsp. fetus (strain 82-40)).